The following is a 371-amino-acid chain: uncharacterized protein (371 aa).

This sequence belongs to the serpin family.

This is an uncharacterized protein from Pyrobaculum aerophilum (strain ATCC 51768 / DSM 7523 / JCM 9630 / CIP 104966 / NBRC 100827 / IM2).